The chain runs to 139 residues: GSK3-beta interaction protein (139 aa).

Residues 1-22 (METDCNPMELSSMSGFEEGSEL) form a disordered region. Residues 41–45 (VNDVL) form a required for PRKAR2A interaction; contributes to a protective effect against H(2)O(2)-induced apoptosis region. The segment at 115–139 (SPAYREAFGNALLQRLEALKRDGQS) is interaction with GSK3B and acts as a GSK3B inhibitor.

The protein belongs to the GSKIP family. Forms a complex composed of PRKAR2A or PRKAR2B, GSK3B and GSKIP through GSKIP interaction; facilitates PKA-induced phosphorylation of GSK3B leading to GSK3B inactivation; recruits DNM1L through GSK3B for PKA-mediated phosphorylation of DNM1L; promotes beta-catenin degradation through GSK3B-induced phosphorylation of beta-catenin; stabilizes beta-catenin and enhances Wnt-induced signaling through PKA-induced phosphorylation of beta-catenin. Interacts with GSK3B; induces GSK3B-mediated phosphorylation of GSKIP and inhibits GSK3B kinase activity. In terms of processing, phosphorylated by GSK3B.

Its subcellular location is the cytoplasm. It localises to the nucleus. In terms of biological role, A-kinase anchoring protein for GSK3B and PKA that regulates or facilitates their kinase activity towards their targets. The ternary complex enhances Wnt-induced signaling by facilitating the GSK3B- and PKA-induced phosphorylation of beta-catenin leading to beta-catenin degradation and stabilization respectively. Upon cAMP activation, the ternary complex contributes to neuroprotection against oxidative stress-induced apoptosis by facilitating the PKA-induced phosphorylation of DML1 and PKA-induced inactivation of GSK3B. During neurite outgrowth promotes neuron proliferation; while increases beta-catenin-induced transcriptional activity through GSK3B kinase activity inhibition, reduces N-cadherin level to promote cell cycle progression. May play a role in cleft palate formation and is required for postnatal life through modulation of the activity of GSK3B during development. In Macaca fascicularis (Crab-eating macaque), this protein is GSK3-beta interaction protein.